We begin with the raw amino-acid sequence, 88 residues long: ATP synthase F(0) complex subunit f, mitochondrial (88 aa).

Ala-2 is modified (N-acetylalanine). Residue Ser-3 is modified to Phosphoserine. Lys-16 bears the N6-acetyllysine mark. A helical membrane pass occupies residues 62–79 (MVLAAYVFLNYCRSYKEL).

Component of the ATP synthase complex composed at least of ATP5F1A/subunit alpha, ATP5F1B/subunit beta, ATP5MC1/subunit c (homooctomer), MT-ATP6/subunit a, MT-ATP8/subunit 8, ATP5ME/subunit e, ATP5MF/subunit f, ATP5MG/subunit g, ATP5MK/subunit k, ATP5MJ/subunit j, ATP5F1C/subunit gamma, ATP5F1D/subunit delta, ATP5F1E/subunit epsilon, ATP5PF/subunit F6, ATP5PB/subunit b, ATP5PD/subunit d, ATP5PO/subunit OSCP. ATP synthase complex consists of a soluble F(1) head domain (subunits alpha(3) and beta(3)) - the catalytic core - and a membrane F(0) domain - the membrane proton channel (subunits c, a, 8, e, f, g, k and j). These two domains are linked by a central stalk (subunits gamma, delta, and epsilon) rotating inside the F1 region and a stationary peripheral stalk (subunits F6, b, d, and OSCP).

The protein localises to the mitochondrion. Its subcellular location is the mitochondrion inner membrane. Its function is as follows. Subunit f, of the mitochondrial membrane ATP synthase complex (F(1)F(0) ATP synthase or Complex V) that produces ATP from ADP in the presence of a proton gradient across the membrane which is generated by electron transport complexes of the respiratory chain. ATP synthase complex consist of a soluble F(1) head domain - the catalytic core - and a membrane F(1) domain - the membrane proton channel. These two domains are linked by a central stalk rotating inside the F(1) region and a stationary peripheral stalk. During catalysis, ATP synthesis in the catalytic domain of F(1) is coupled via a rotary mechanism of the central stalk subunits to proton translocation. In vivo, can only synthesize ATP although its ATP hydrolase activity can be activated artificially in vitro. Part of the complex F(0) domain. This chain is ATP synthase F(0) complex subunit f, mitochondrial, found in Bos taurus (Bovine).